The following is a 223-amino-acid chain: uncharacterized protein (223 aa).

An N-terminal signal peptide occupies residues 1–22 (MHLKKALCPALCTFLIHLCLHA). One can recognise a VWFA domain in the interval 30–204 (DIFLMIDKSR…RSIAAAHSKR (175 aa)). The disordered stretch occupies residues 199-223 (AAHSKRPTPTPPAKESSPRYTPSLD).

This is an uncharacterized protein from Treponema pallidum (strain Nichols).